A 318-amino-acid chain; its full sequence is MATVPLFTQFPCKTLNPSSSNTKHQSKSPILLPINSINRRSEIGVSVHRPDFKIRATDIDDEWGQDGVERVFASSSTVSVADKAIESVEETERLKRSLADSLYGTDRGLSVSSDTRAEISELITQLESKNPTPAPNEALFLLNGKWILAYTSFVGLFPLLSRRIEPLVKVDEISQTIDSDSFTVQNSVRFAGPFSTTSFSTNAKFEIRSPKRVQIKFEQGVIGTPQLTDSIEIPESVEVLGQKIDLNPIKGLLTSVQDTASSVARTISNQPPLKFSLPSDNTQSWLLTTYLDKDLRISRGDGGSVYVLIKEGSSLLNP.

A chloroplast-targeting transit peptide spans 1-55 (MATVPLFTQFPCKTLNPSSSNTKHQSKSPILLPINSINRRSEIGVSVHRPDFKIR). The residue at position 57 (Thr-57) is a Phosphothreonine.

Belongs to the PAP/fibrillin family. In terms of assembly, interacts (via N-terminus) with ABI2. In terms of tissue distribution, expressed in flower buds. Detected in tapetal cells, endothecium and connective in anthers and in subepidermal cells in filaments.

It is found in the plastid. The protein localises to the chloroplast. Its subcellular location is the plastoglobule. It localises to the chloroplast thylakoid. Probably involved in light/cold stress-related jasmonate (JA) biosynthesis. Contributes to the protection of photosystem II (PSII) against light stress. The chain is Probable plastid-lipid-associated protein 1, chloroplastic (PAP1) from Arabidopsis thaliana (Mouse-ear cress).